A 145-amino-acid chain; its full sequence is Large ribosomal subunit protein bL9 (145 aa).

It belongs to the bacterial ribosomal protein bL9 family.

In terms of biological role, binds to the 23S rRNA. In Mesomycoplasma hyopneumoniae (strain J / ATCC 25934 / NCTC 10110) (Mycoplasma hyopneumoniae), this protein is Large ribosomal subunit protein bL9.